The primary structure comprises 91 residues: Small ribosomal subunit protein bS20 (91 aa).

The disordered stretch occupies residues 1–25 (MANTKSAEKRHRQSLKRRARNVTVR). The span at 8 to 20 (EKRHRQSLKRRAR) shows a compositional bias: basic residues.

The protein belongs to the bacterial ribosomal protein bS20 family.

In terms of biological role, binds directly to 16S ribosomal RNA. The polypeptide is Small ribosomal subunit protein bS20 (Myxococcus xanthus (strain DK1622)).